Reading from the N-terminus, the 459-residue chain is Cysteine--tRNA ligase (459 aa).

Cys-28 is a binding site for Zn(2+). Positions 30–40 (VTVYDLCHIGH) match the 'HIGH' region motif. Zn(2+)-binding residues include Cys-209, His-234, and Glu-238. A 'KMSKS' region motif is present at residues 266 to 270 (KMSKS). Lys-269 provides a ligand contact to ATP.

This sequence belongs to the class-I aminoacyl-tRNA synthetase family. As to quaternary structure, monomer. Zn(2+) serves as cofactor.

It is found in the cytoplasm. It catalyses the reaction tRNA(Cys) + L-cysteine + ATP = L-cysteinyl-tRNA(Cys) + AMP + diphosphate. The polypeptide is Cysteine--tRNA ligase (Shewanella oneidensis (strain ATCC 700550 / JCM 31522 / CIP 106686 / LMG 19005 / NCIMB 14063 / MR-1)).